The sequence spans 266 residues: Serine/arginine-rich splicing factor 12 (266 aa).

A disordered region spans residues 42–266; the sequence is ARPRRPRAPR…SRSYHHKNSW (225 aa). Residues 43-62 are compositionally biased toward basic residues; the sequence is RPRRPRAPRPRLRLRGRPGR. Residues 102 to 114 show a composition bias toward basic and acidic residues; it reads KSKERHLCSPSDH. Positions 115-127 are enriched in basic residues; the sequence is RRSRSPSQRRSRS. The segment covering 133–144 has biased composition (basic and acidic residues); it reads GRDRRHSDSLKE. Residues 151–166 are compositionally biased toward low complexity; that stretch reads SYSQSKSRSKSLPRQS. A compositionally biased stretch (basic residues) spans 183-194; the sequence is GRSRSKSLPKRS. 2 stretches are compositionally biased toward polar residues: residues 202-212 and 235-244; these read SRSPQKQTGSG and AYTSSGSKTQ. The segment covering 245 to 266 has biased composition (basic residues); that stretch reads TTKHSHLRSHSRSRSYHHKNSW.

The protein belongs to the splicing factor SR family.

The protein resides in the nucleus. Functionally, splicing factor that seems to antagonize SR proteins in pre-mRNA splicing regulation. This Mus musculus (Mouse) protein is Serine/arginine-rich splicing factor 12 (Srsf12).